A 274-amino-acid chain; its full sequence is NH(3)-dependent NAD(+) synthetase (274 aa).

Position 46 to 53 (46 to 53) interacts with ATP; sequence GISGGQDS. A Mg(2+)-binding site is contributed by aspartate 52. Arginine 140 provides a ligand contact to deamido-NAD(+). Position 160 (threonine 160) interacts with ATP. Residue glutamate 165 participates in Mg(2+) binding. Deamido-NAD(+)-binding residues include lysine 173 and aspartate 180. ATP-binding residues include lysine 189 and threonine 211. Residue 260–261 participates in deamido-NAD(+) binding; sequence HK.

It belongs to the NAD synthetase family. Homodimer.

It catalyses the reaction deamido-NAD(+) + NH4(+) + ATP = AMP + diphosphate + NAD(+) + H(+). It participates in cofactor biosynthesis; NAD(+) biosynthesis; NAD(+) from deamido-NAD(+) (ammonia route): step 1/1. Its function is as follows. Catalyzes the ATP-dependent amidation of deamido-NAD to form NAD. Uses ammonia as a nitrogen source. The polypeptide is NH(3)-dependent NAD(+) synthetase (Streptococcus pyogenes serotype M1).